Consider the following 581-residue polypeptide: Sabinene synthase 1, chloroplastic (581 aa).

A chloroplast-targeting transit peptide spans 1 to 28 (MPLNSLHNLERKPSKAWSTSCTAPAARL). (2E)-geranyl diphosphate contacts are provided by Arg-297, Asp-334, Asp-338, Arg-475, and Asp-478. Mg(2+)-binding residues include Asp-334 and Asp-338. Positions 334 to 338 (DDVYD) match the DDXXD motif motif. Residues Asp-478, Thr-482, and Glu-486 each coordinate Mg(2+).

The protein belongs to the terpene synthase family. Tpsb subfamily. Requires Mg(2+) as cofactor. Mn(2+) is required as a cofactor.

The protein localises to the plastid. It localises to the chloroplast. The catalysed reaction is (2E)-geranyl diphosphate = sabinene + diphosphate. The enzyme catalyses (2E)-geranyl diphosphate = beta-myrcene + diphosphate. Its pathway is secondary metabolite biosynthesis; terpenoid biosynthesis. Functionally, monoterpene synthase (TPS) involved in the biosynthesis of monoterpene natural products, components of the chemical defense arsenal. Catalyzes the conversion of (2E)-geranyl diphosphate (GPP) into sabinene, and, as minor products, myrcene. The sequence is that of Sabinene synthase 1, chloroplastic from Salvia pomifera (Apple sage).